A 373-amino-acid polypeptide reads, in one-letter code: GTPase Obg (373 aa).

Residues 1 to 158 (MFVDSVELLI…KQVRLEMKLI (158 aa)) enclose the Obg domain. Residues 62–83 (NHIKAENGRPGEGRKKYGRKGQ) form a disordered region. Residues 64–76 (IKAENGRPGEGRK) show a composition bias toward basic and acidic residues. The region spanning 159-362 (ADVGLVGYPN…LRYALGDFVK (204 aa)) is the OBG-type G domain. Residues 165–172 (GYPNVGKS), 190–194 (FTTLT), 212–215 (DIPG), 280–283 (TKID), and 343–345 (SSV) each bind GTP. Mg(2+) contacts are provided by Ser-172 and Thr-192.

The protein belongs to the TRAFAC class OBG-HflX-like GTPase superfamily. OBG GTPase family. In terms of assembly, monomer. The cofactor is Mg(2+).

It is found in the cytoplasm. An essential GTPase which binds GTP, GDP and possibly (p)ppGpp with moderate affinity, with high nucleotide exchange rates and a fairly low GTP hydrolysis rate. Plays a role in control of the cell cycle, stress response, ribosome biogenesis and in those bacteria that undergo differentiation, in morphogenesis control. The protein is GTPase Obg of Sulfurovum sp. (strain NBC37-1).